Consider the following 437-residue polypeptide: Protein disulfide-isomerase tmx3a (437 aa).

The N-terminal stretch at 1-21 (MANMRNIILTALLSAIALVSG) is a signal peptide. In terms of domain architecture, Thioredoxin spans 22–126 (YVEGLDDKFT…IIEFTNRVSG (105 aa)). Topologically, residues 22-368 (YVEGLDDKFT…KNTVMSMVET (347 aa)) are extracellular. Catalysis depends on nucleophile residues cysteine 48 and cysteine 51. An intrachain disulfide couples cysteine 48 to cysteine 51. The N-linked (GlcNAc...) asparagine glycan is linked to asparagine 308. Residues 369–389 (APVFSCFVLGLPVGVVVLVIY) traverse the membrane as a helical segment. At 390 to 437 (ATCTAVPADDEKPEEEATASPALDTHGKKAIESQPESTEKTSEAKKED) the chain is on the cytoplasmic side. The segment at 398–437 (DDEKPEEEATASPALDTHGKKAIESQPESTEKTSEAKKED) is disordered. Basic and acidic residues predominate over residues 414 to 437 (THGKKAIESQPESTEKTSEAKKED). The Di-lysine motif motif lies at 434–437 (KKED).

The protein localises to the endoplasmic reticulum membrane. It catalyses the reaction Catalyzes the rearrangement of -S-S- bonds in proteins.. In terms of biological role, probable disulfide isomerase, which participates in the folding of proteins containing disulfide bonds. May act as a dithiol oxidase. Acts as a regulator of endoplasmic reticulum-mitochondria contact sites via its ability to regulate redox signals. This is Protein disulfide-isomerase tmx3a (tmx3a) from Danio rerio (Zebrafish).